Here is a 411-residue protein sequence, read N- to C-terminus: MKQRKGVLIILDGLGDRPIKELGGKTPLEYANTPTMDYLAKIGILGQQDPIKPGQPAGSDTAHLSIFGYDPYKSYRGRGYFEALGVGLELDEDDLAFRVNFATLENGVITDRRAGRISTEEAHELAKAIQENVDIPVDFIFKGATGHRAVLVLKGMAEGYKVGENDPHEAGKPPHPFTWEDEASKKVAEILEEFVKKAHEVLDKHPINEKRRKEGKPVANYLLIRGAGTYPNIPMKFTEQWKVKAAAVVAVALVKGVAKAIGFDVYTPKGATGEYNTDEMAKARKAVELLKDYDFVFIHFKPTDAAGHDNNPKLKAELIERADRMIKYIVDHVDLEDVVIAITGDHSTPCEVMNHSGDPVPLLIAGGGVRADYTEKFGEREAMRGGLGRIRGHDIVPIMMDLMNRTEKFGA.

This sequence belongs to the BPG-independent phosphoglycerate mutase family. A-PGAM subfamily. In terms of assembly, homotetramer. It depends on Mg(2+) as a cofactor.

It catalyses the reaction (2R)-2-phosphoglycerate = (2R)-3-phosphoglycerate. It participates in carbohydrate degradation; glycolysis; pyruvate from D-glyceraldehyde 3-phosphate: step 3/5. Its activity is regulated as follows. Inhibited to approximately 20% by EDTA. Its function is as follows. Catalyzes the interconversion of 2-phosphoglycerate and 3-phosphoglycerate. This Pyrococcus furiosus (strain ATCC 43587 / DSM 3638 / JCM 8422 / Vc1) protein is 2,3-bisphosphoglycerate-independent phosphoglycerate mutase (apgM).